Here is a 659-residue protein sequence, read N- to C-terminus: 1,4-alpha-glucan branching enzyme GlgB 2 (659 aa).

Positions 1–26 are disordered; the sequence is MRNYKELKHEKNGNVTEKIGENKGKS. The active-site Nucleophile is aspartate 337. Glutamate 390 serves as the catalytic Proton donor.

Belongs to the glycosyl hydrolase 13 family. GlgB subfamily. Monomer.

It catalyses the reaction Transfers a segment of a (1-&gt;4)-alpha-D-glucan chain to a primary hydroxy group in a similar glucan chain.. The protein operates within glycan biosynthesis; glycogen biosynthesis. Its function is as follows. Catalyzes the formation of the alpha-1,6-glucosidic linkages in glycogen by scission of a 1,4-alpha-linked oligosaccharide from growing alpha-1,4-glucan chains and the subsequent attachment of the oligosaccharide to the alpha-1,6 position. This is 1,4-alpha-glucan branching enzyme GlgB 2 from Clostridium perfringens (strain SM101 / Type A).